The sequence spans 487 residues: NADH-quinone oxidoreductase subunit N (487 aa).

14 helical membrane passes run 8–28 (LIAM…MLSI), 35–55 (FINA…LYFV), 78–98 (GLVI…LVGY), 104–124 (EFYL…SANH), 125–145 (LASL…LIGY), 159–179 (YMLL…LLYA), 203–223 (ILAG…LVPF), 235–255 (PAPV…AVVM), 271–291 (LVLS…AISQ), 297–317 (LLGY…VAVQ), 328–348 (IGVY…VVSL), 376–396 (AVMT…GFIG), 409–428 (LWWL…YYYL), and 451–471 (ALTA…VLGI).

Belongs to the complex I subunit 2 family. In terms of assembly, NDH-1 is composed of 13 different subunits. Subunits NuoA, H, J, K, L, M, N constitute the membrane sector of the complex.

The protein localises to the cell inner membrane. The catalysed reaction is a quinone + NADH + 5 H(+)(in) = a quinol + NAD(+) + 4 H(+)(out). NDH-1 shuttles electrons from NADH, via FMN and iron-sulfur (Fe-S) centers, to quinones in the respiratory chain. The immediate electron acceptor for the enzyme in this species is believed to be ubiquinone. Couples the redox reaction to proton translocation (for every two electrons transferred, four hydrogen ions are translocated across the cytoplasmic membrane), and thus conserves the redox energy in a proton gradient. The protein is NADH-quinone oxidoreductase subunit N of Yersinia pseudotuberculosis serotype O:1b (strain IP 31758).